A 485-amino-acid chain; its full sequence is Subtilisin-like protease 1 (485 aa).

The first 19 residues, 1–19 (MGIFRFISISLAAVSAANA), serve as a signal peptide directing secretion. Positions 20 to 116 (GHILSMGHAK…VEPDTTITIH (97 aa)) are excised as a propeptide. One can recognise an Inhibitor I9 domain in the interval 34 to 116 (SYIVVMKDGT…VEPDTTITIH (83 aa)). The region spanning 126–400 (SWGLARISSQ…NILINNGDAK (275 aa)) is the Peptidase S8 domain. Residues D158 and H190 each act as charge relay system in the active site. N251 is a glycosylation site (N-linked (GlcNAc...) asparagine). S345 functions as the Charge relay system in the catalytic mechanism. Over residues 377-394 (GTSSVTNPGPGTRTNILI) the composition is skewed to polar residues. Residues 377 to 462 (GTSSVTNPGP…HTPFPNDDFN (86 aa)) are disordered. A compositionally biased stretch (pro residues) spans 409–418 (PSQPPKPSQP). Residues 419–428 (SKPQQPSEPQ) are compositionally biased toward low complexity. Residues 433–455 (PQEPAPGQPAPAPAPVPQHPHTP) are compositionally biased toward pro residues.

Belongs to the peptidase S8 family.

The protein resides in the secreted. In terms of biological role, secreted subtilisin-like serine protease with keratinolytic activity that contributes to pathogenicity. This Arthroderma otae (strain ATCC MYA-4605 / CBS 113480) (Microsporum canis) protein is Subtilisin-like protease 1 (SUB1).